The following is a 154-amino-acid chain: MSARCGSQARTLYELCDQCNITLPTLQIDCVFCKTVLKTAEVLAFAFRELYVVWRDDFPHAACPRCLDLHGKVNQYRNFRYAAYAPTVEEETGLTILQVRIRCCKCHKPLSPVEKTNHIVKKTQFFKLKDSWTGYCLHCWKKCMEKGQRSETLC.

2 zinc fingers span residues Cys30–Cys66 and Cys103–Cys139.

It belongs to the papillomaviridae E6 protein family. In terms of assembly, forms homodimers. Interacts with ubiquitin-protein ligase UBE3A/E6-AP; this interaction stimulates UBE3A ubiquitin activity. Interacts with host TP53 and EP300; this interaction inhibits TP53 activity.

It localises to the host cytoplasm. The protein resides in the host nucleus. Plays a major role in the induction and maintenance of cellular transformation. E6 associates with host UBE3A/E6-AP ubiquitin-protein ligase and modulates its activity. Sequesters tumor suppressor TP53 in the host cytoplasm and modulates its activity by interacting with host EP300 that results in the reduction of TP53 acetylation and activation. In turn, apoptosis induced by DNA damage is inhibited. E6 also protects host keratinocytes from apoptosis by mediating the degradation of host BAK1. May also inhibit host immune response. This Homo sapiens (Human) protein is Protein E6.